Reading from the N-terminus, the 85-residue chain is Large ribosomal subunit protein bL27 (85 aa).

Over residues 1 to 11 (MASKASGGSTR) the composition is skewed to polar residues. The segment at 1–20 (MASKASGGSTRNGRDSISKR) is disordered.

This sequence belongs to the bacterial ribosomal protein bL27 family.

This Sulfurihydrogenibium sp. (strain YO3AOP1) protein is Large ribosomal subunit protein bL27.